A 1143-amino-acid polypeptide reads, in one-letter code: cGMP-specific 3',5'-cyclic phosphodiesterase (1143 aa).

2 stretches are compositionally biased toward low complexity: residues 1 to 19 (MHGP…DVSS) and 31 to 45 (TTSS…ASSS). The disordered stretch occupies residues 1-167 (MHGPVSRSSS…KASTTASQQD (167 aa)). Over residues 46–59 (KPLTNGANKTTIST) the composition is skewed to polar residues. Positions 75–84 (GAIPASSSSG) are enriched in low complexity. Positions 96–107 (SNNNRPAATNRS) are enriched in polar residues. The span at 131–153 (SSSSPSQSPSQTQASIQTQTSQQ) shows a compositional bias: low complexity. GAF domains are found at residues 272–424 (DIDV…GIGI) and 456–637 (NLEC…GLGI). The region spanning 667-990 (SQDQTEKLTQ…RNWQDLAEKV (324 aa)) is the PDEase domain. H743 functions as the Proton donor in the catalytic mechanism. H747, H783, D784, and D894 together coordinate a divalent metal cation. Disordered stretches follow at residues 1031–1060 (QQSQ…TGAL) and 1090–1143 (SHVS…CALL). 2 stretches are compositionally biased toward basic and acidic residues: residues 1036 to 1047 (GSEDSHTPEHQR) and 1090 to 1100 (SHVSEDMDDKS). Over residues 1109 to 1127 (ASGSMGRMSASSSTSSTGG) the composition is skewed to low complexity. Basic residues predominate over residues 1133 to 1143 (SKKRSKLCALL). At C1140 the chain carries Cysteine methyl ester. Residue C1140 is the site of S-farnesyl cysteine attachment. Positions 1141–1143 (ALL) are cleaved as a propeptide — removed in mature form.

Belongs to the cyclic nucleotide phosphodiesterase family. Interacts with PrBP. It depends on a divalent metal cation as a cofactor.

The protein resides in the cell membrane. It carries out the reaction 3',5'-cyclic GMP + H2O = GMP + H(+). Its function is as follows. Has a role regulating cGMP transport in Malpighian tubule principal cells. This Drosophila simulans (Fruit fly) protein is cGMP-specific 3',5'-cyclic phosphodiesterase.